The chain runs to 343 residues: Biotin synthase (343 aa).

The Radical SAM core domain maps to N64–R291. Positions 79, 83, and 86 each coordinate [4Fe-4S] cluster. [2Fe-2S] cluster is bound by residues C123, C154, C214, and R286.

The protein belongs to the radical SAM superfamily. Biotin synthase family. As to quaternary structure, homodimer. The cofactor is [4Fe-4S] cluster. Requires [2Fe-2S] cluster as cofactor.

It catalyses the reaction (4R,5S)-dethiobiotin + (sulfur carrier)-SH + 2 reduced [2Fe-2S]-[ferredoxin] + 2 S-adenosyl-L-methionine = (sulfur carrier)-H + biotin + 2 5'-deoxyadenosine + 2 L-methionine + 2 oxidized [2Fe-2S]-[ferredoxin]. The protein operates within cofactor biosynthesis; biotin biosynthesis; biotin from 7,8-diaminononanoate: step 2/2. Catalyzes the conversion of dethiobiotin (DTB) to biotin by the insertion of a sulfur atom into dethiobiotin via a radical-based mechanism. This is Biotin synthase from Cupriavidus necator (strain ATCC 17699 / DSM 428 / KCTC 22496 / NCIMB 10442 / H16 / Stanier 337) (Ralstonia eutropha).